Here is a 77-residue protein sequence, read N- to C-terminus: Ras-related C3 botulinum toxin substrate 1 (77 aa).

A GTP-binding site is contributed by 22–24; it reads KLD. Residue Lys53 forms a Glycyl lysine isopeptide (Lys-Gly) (interchain with G-Cter in ubiquitin) linkage. 65–66 contacts GTP; the sequence is AL.

Belongs to the small GTPase superfamily. Rho family. In terms of assembly, interacts with NISCH. Interacts with PIP5K1A. Interacts with the GTP-bound form of RAB7A. Interacts with SRGAP2. Interacts with CYFIP1/SRA-1. Interacts with PLXNB3. Interacts with ARHGDIA; the interaction is induced by SEMA5A, mediated through PLXNB3 and inactivates and stabilizes RAC1. Interacts (GTP-bound form preferentially) with PKN2 (via the REM repeats); the interaction stimulates autophosphorylation and phosphorylation of PKN2. Interacts with the GEF proteins PREX1, RASGRF2, FARP1, FARP2, DOCK1, DOCK2 and DOCK7, which promote the exchange between GDP and GTP, and therefore activate it. Interacts with PARD6A, PARD6B and PARD6G in a GTP-dependent manner. Part of a quaternary complex containing PARD3, some PARD6 protein (PARD6A, PARD6B or PARD6G) and some atypical PKC protein (PRKCI or PRKCZ), which plays a central role in epithelial cell polarization. Found in a trimeric complex composed of DOCK1 and ELMO1, which plays a central role in phagocytosis of apoptotic cells. Interacts with RALBP1 via its effector domain. Interacts with PLXNB1. Part of a complex with MAP2K3, MAP3K3, CCM2 and DEF6. Interacts with BAIAP2, BAIAP2L1 and DEF6. Interacts with Y.pseudotuberculosis YPKA and PLCB2. Interacts with NOXA1. Interacts with ARHGEF2. Interacts with TBC1D2. Interacts with UNKL. Interacts with USP6. Interacts with SPATA13. Interacts with ARHGEF16; mediates activation of RAC1 by EPHA2. Interacts with ITGB4. Interacts with S100A8 and calprotectin (S100A8/9). Interacts with PACSIN2. Interacts (when active) with PPP5C (via TPR repeats); activates PPP5C phosphatase activity and translocates PPP5C to the cell membrane. Interacts with RAPH1 (via Ras associating and PH domains). Interacts with MTSS2 (via IMD domain); this interaction may be important to potentiate PDGF-induced RAC1 activation. Interacts with PAK2. Interacts (GTP-bound form) with SH3RF1 and SH3RF3. Found in a complex with SH3RF1, MAPK8IP1/JIP1, MAP3K11/MLK3, MAP2K7/MKK7 and MAPK8/JNK1. Interacts (both active GTP- or inactive GDP-bound forms) with SH3RF2. Interacts (GTP-bound form preferentially) with CYRIB. Interacts with DOCK4 (via DOCKER domain); functions as a guanine nucleotide exchange factor (GEF) for RAC1. Interacts with GARRE1. Interacts with RAP1GDS1. May interact with ARHGAP36. Interacts with DSG3; the interaction is required for DSG3 translocation to cell-cell junctions, organization of cortical F-actin bundles and actin anchoring at cell-cell junctions. Component of the phagocyte NADPH oxidase complex composed of an obligatory core heterodimer formed by the membrane proteins CYBA and CYBB and the cytosolic regulatory subunits NCF1/p47-phox, NCF2/p67-phox, NCF4/p40-phox and the small GTPase RAC1 or RAC2. Interacts with NCF2. The N-terminus is blocked. Post-translationally, GTP-bound active form is ubiquitinated by HACE1, leading to its degradation by the proteasome.

The protein localises to the cytoplasm. It localises to the membrane. Its subcellular location is the melanosome. It is found in the cell projection. The protein resides in the lamellipodium. The protein localises to the dendrite. It localises to the synapse. Its subcellular location is the nucleus. It carries out the reaction GTP + H2O = GDP + phosphate + H(+). With respect to regulation, regulated by guanine nucleotide exchange factors (GEFs) which promote the exchange of bound GDP for free GTP, GTPase activating proteins (GAPs) which increase the GTP hydrolysis activity, and GDP dissociation inhibitors which inhibit the dissociation of the nucleotide from the GTPase. GTP hydrolysis is stimulated by ARHGAP30. Functionally, plasma membrane-associated small GTPase which cycles between active GTP-bound and inactive GDP-bound states. In its active state, binds to a variety of effector proteins to regulate cellular responses such as secretory processes, phagocytosis of apoptotic cells, epithelial cell polarization, neurons adhesion, migration and differentiation, and growth-factor induced formation of membrane ruffles. Rac1 p21/rho GDI heterodimer is the active component of the cytosolic factor sigma 1, which is involved in stimulation of the NADPH oxidase activity in macrophages. Essential for the SPATA13-mediated regulation of cell migration and adhesion assembly and disassembly. Stimulates PKN2 kinase activity. In concert with RAB7A, plays a role in regulating the formation of RBs (ruffled borders) in osteoclasts. In podocytes, promotes nuclear shuttling of NR3C2; this modulation is required for a proper kidney functioning. Required for atypical chemokine receptor ACKR2-induced LIMK1-PAK1-dependent phosphorylation of cofilin (CFL1) and for up-regulation of ACKR2 from endosomal compartment to cell membrane, increasing its efficiency in chemokine uptake and degradation. In neurons, is involved in dendritic spine formation and synaptic plasticity. In hippocampal neurons, involved in spine morphogenesis and synapse formation, through local activation at synapses by guanine nucleotide exchange factors (GEFs), such as ARHGEF6/ARHGEF7/PIX. In synapses, seems to mediate the regulation of F-actin cluster formation performed by SHANK3. In neurons, plays a crucial role in regulating GABA(A) receptor synaptic stability and hence GABAergic inhibitory synaptic transmission through its role in PAK1 activation and eventually F-actin stabilization. Required for DSG3 translocation to cell-cell junctions, DSG3-mediated organization of cortical F-actin bundles and anchoring of actin at cell junctions; via interaction with DSG3. Subunit of the phagocyte NADPH oxidase complex that mediates the transfer of electrons from cytosolic NADPH to O2 to produce the superoxide anion (O2(-)). The sequence is that of Ras-related C3 botulinum toxin substrate 1 from Cavia porcellus (Guinea pig).